A 337-amino-acid polypeptide reads, in one-letter code: Perakine reductase (337 aa).

Catalysis depends on Tyr57, which acts as the Proton donor. His126 is a binding site for substrate. Residue 205 to 214 (SPIGRGLFAG) participates in NADP(+) binding.

This sequence belongs to the aldo/keto reductase family.

It carries out the reaction raucaffrinoline + NADP(+) = perakine + NADPH + H(+). Functionally, aldo-keto reductase involved in the biosynthesis of monoterpenoid indole alkaloids. Broad substrate specificity enzyme with a high selectivity in the group of alkaloids. Can use perakine, 19(S),20(R)-dihydro-peraksine-17,21-al, cinnamic aldehyde, p-coumaric aldehyde and 3-(3,4,5-trimethoxyphenyl)propanal as substrates, but not ketosteroids such as progesterone. NADPH could not be replaced by NADH. The sequence is that of Perakine reductase (PR) from Rauvolfia serpentina (Serpentine wood).